Consider the following 108-residue polypeptide: ATP-dependent Clp protease adapter protein ClpS (108 aa).

Basic and acidic residues predominate over residues 1-15 (MPHESSPDSQHEHGV). The tract at residues 1–22 (MPHESSPDSQHEHGVAVEAARP) is disordered.

Belongs to the ClpS family. In terms of assembly, binds to the N-terminal domain of the chaperone ClpA.

In terms of biological role, involved in the modulation of the specificity of the ClpAP-mediated ATP-dependent protein degradation. This is ATP-dependent Clp protease adapter protein ClpS from Stenotrophomonas maltophilia (strain K279a).